We begin with the raw amino-acid sequence, 1960 residues long: Myosin-9 (1960 aa).

Position 2 is an N-acetylalanine (Ala-2). The interval 2–838 (AQQAADKYLY…RLFTKVKPLL (837 aa)) is mediates interaction with LIMCH1. At Lys-8 the chain carries N6-acetyllysine. Tyr-11 carries the phosphotyrosine modification. The region spanning 27–77 (AAKKLVWVPSDKSGFEPASLKEEVGEEAIVELVENGKKVKVNKDDIQKMNP) is the Myosin N-terminal SH3-like domain. One can recognise a Myosin motor domain in the interval 81 to 776 (SKVEDMAELT…VLAHLEEERD (696 aa)). Residue Lys-102 is modified to N6-acetyllysine. 174-181 (GESGAGKT) provides a ligand contact to ATP. Lys-299, Lys-435, and Lys-613 each carry N6-acetyllysine. Ser-628 bears the Phosphoserine mark. Positions 654 to 676 (LAKLMATLRNTNPNFVRCIIPNH) are actin-binding. Tyr-754 is modified (phosphotyrosine). Residues 779–808 (ITDVIIGFQACCRGYLARKAFAKRQQQLTA) enclose the IQ domain. Positions 837–1926 (LLQVSRQEEE…LKNKLRRGDL (1090 aa)) form a coiled coil. The residue at position 850 (Lys-850) is an N6-succinyllysine. N6-acetyllysine is present on residues Lys-860, Lys-975, and Lys-1024. Residues 1035–1055 (RLRREEKQRQELEKTRRKLEG) are compositionally biased toward basic and acidic residues. Residues 1035 to 1057 (RLRREEKQRQELEKTRRKLEGDS) are disordered. Residue Ser-1114 is modified to Phosphoserine. The interval 1118-1137 (EDLESERASRNKAEKQKRDL) is disordered. Positions 1122 to 1137 (SERASRNKAEKQKRDL) are enriched in basic and acidic residues. N6-acetyllysine is present on residues Lys-1234, Lys-1249, Lys-1357, Lys-1392, Lys-1404, Lys-1410, Lys-1459, and Lys-1638. N6-succinyllysine is present on Lys-1669. Residue Ser-1714 is modified to Phosphoserine. 3 positions are modified to N6-acetyllysine: Lys-1793, Lys-1802, and Lys-1845. The interval 1877-1960 (RQLEEAEEEA…ADGAEAKPAE (84 aa)) is disordered. An Omega-N-methylarginine modification is found at Arg-1923. Ser-1943 bears the Phosphoserine mark. A compositionally biased stretch (basic and acidic residues) spans 1948 to 1960 (DGKADGAEAKPAE).

The protein belongs to the TRAFAC class myosin-kinesin ATPase superfamily. Myosin family. As to quaternary structure, myosin is a hexameric protein that consists of 2 heavy chain subunits (MHC), 2 alkali light chain subunits (MLC) and 2 regulatory light chain subunits (MLC-2). Interacts with RASIP1. Interacts with DDR1. Interacts with PDLIM2. Interacts with SVIL. Interacts with HTRA3. Interacts with Myo7a. Interacts with CFAP95. Interacts with LIMCH1; independently of the integration of MYH9 into the myosin complex. Interacts with RAB3A. Interacts with ZBED4. Interacts with S100A4; this interaction increases cell motility. (Microbial infection) Interacts with herpes simplex virus 1/HHV-1 envelope glycoprotein B. Post-translationally, ISGylated. In terms of processing, ubiquitination. In the kidney, expressed in the glomeruli. Also expressed in leukocytes.

The protein resides in the cytoplasm. It is found in the cytoskeleton. Its subcellular location is the cell cortex. It localises to the cytoplasmic vesicle. The protein localises to the secretory vesicle. The protein resides in the cortical granule. It is found in the cell membrane. Functionally, cellular myosin that appears to play a role in cytokinesis, cell shape, and specialized functions such as secretion and capping. Required for cortical actin clearance prior to oocyte exocytosis. Promotes cell motility in conjunction with S100A4. During cell spreading, plays an important role in cytoskeleton reorganization, focal contact formation (in the margins but not the central part of spreading cells), and lamellipodial retraction; this function is mechanically antagonized by MYH10. (Microbial infection) Acts as a receptor for herpes simplex virus 1/HHV-1 envelope glycoprotein B. This Homo sapiens (Human) protein is Myosin-9 (MYH9).